We begin with the raw amino-acid sequence, 392 residues long: Galactokinase (392 aa).

Substrate is bound at residue 40-43 (EHID). ATP is bound by residues Ser-74 and 128-134 (GSGLSSS). Ser-134 and Glu-167 together coordinate Mg(2+). Asp-179 serves as the catalytic Proton acceptor. Residue Tyr-229 coordinates substrate.

The protein belongs to the GHMP kinase family. GalK subfamily.

Its subcellular location is the cytoplasm. The enzyme catalyses alpha-D-galactose + ATP = alpha-D-galactose 1-phosphate + ADP + H(+). Its pathway is carbohydrate metabolism; galactose metabolism. Its function is as follows. Catalyzes the transfer of the gamma-phosphate of ATP to D-galactose to form alpha-D-galactose-1-phosphate (Gal-1-P). The chain is Galactokinase from Clostridium tetani (strain Massachusetts / E88).